We begin with the raw amino-acid sequence, 332 residues long: Beta-ketoacyl-[acyl-carrier-protein] synthase III (332 aa).

Active-site residues include cysteine 114 and histidine 255. The interval 256 to 260 (QANLR) is ACP-binding. Asparagine 285 is an active-site residue.

Belongs to the thiolase-like superfamily. FabH family. Homodimer.

It localises to the cytoplasm. It carries out the reaction malonyl-[ACP] + acetyl-CoA + H(+) = 3-oxobutanoyl-[ACP] + CO2 + CoA. It functions in the pathway lipid metabolism; fatty acid biosynthesis. Catalyzes the condensation reaction of fatty acid synthesis by the addition to an acyl acceptor of two carbons from malonyl-ACP. Catalyzes the first condensation reaction which initiates fatty acid synthesis and may therefore play a role in governing the total rate of fatty acid production. Possesses both acetoacetyl-ACP synthase and acetyl transacylase activities. Its substrate specificity determines the biosynthesis of branched-chain and/or straight-chain of fatty acids. The sequence is that of Beta-ketoacyl-[acyl-carrier-protein] synthase III from Sulfurimonas denitrificans (strain ATCC 33889 / DSM 1251) (Thiomicrospira denitrificans (strain ATCC 33889 / DSM 1251)).